The sequence spans 175 residues: Ribosome maturation factor RimP (175 aa).

Residues E152 to A175 are disordered. The span at P160 to A175 shows a compositional bias: acidic residues.

It belongs to the RimP family.

It localises to the cytoplasm. Functionally, required for maturation of 30S ribosomal subunits. In Nocardioides sp. (strain ATCC BAA-499 / JS614), this protein is Ribosome maturation factor RimP.